A 367-amino-acid polypeptide reads, in one-letter code: Homoserine O-acetyltransferase (367 aa).

Residues 44–350 form the AB hydrolase-1 domain; sequence NAILVTHAWT…AYGHDAFLLE (307 aa). Ser-150 acts as the Nucleophile in catalysis. A substrate-binding site is contributed by Arg-217. Catalysis depends on residues Asp-311 and His-344. Residue Asp-345 coordinates substrate.

Belongs to the AB hydrolase superfamily. MetX family. Homodimer.

It localises to the cytoplasm. The enzyme catalyses L-homoserine + acetyl-CoA = O-acetyl-L-homoserine + CoA. It participates in amino-acid biosynthesis; L-methionine biosynthesis via de novo pathway; O-acetyl-L-homoserine from L-homoserine: step 1/1. Transfers an acetyl group from acetyl-CoA to L-homoserine, forming acetyl-L-homoserine. This chain is Homoserine O-acetyltransferase, found in Citrifermentans bemidjiense (strain ATCC BAA-1014 / DSM 16622 / JCM 12645 / Bem) (Geobacter bemidjiensis).